The primary structure comprises 246 residues: MAGHSKWANIKHRKAAQDAQRGKIFTKLIRELVTAAKLGGGDTSSNPRLRAAVDKALSNNMTRDTINRAIDRGVGGGDDTNMETKVYEGYGPGGTAVMVECLSDNANRTISQVRPSFTKCGGNLGTEGSVGYLFSKKGLILIASADEDALTEAAIEAGADDIQPQEDGSFEIYTAWEDLGSVRDGIEAAGFKVENAEVTMIPSTTVQLDAETAPKLLDLINRLEDCDDVQNVYHNGEISDEVAALL.

This sequence belongs to the TACO1 family.

It is found in the cytoplasm. This Glaesserella parasuis serovar 5 (strain SH0165) (Haemophilus parasuis) protein is Probable transcriptional regulatory protein HAPS_0943.